The sequence spans 180 residues: Probable chorismate pyruvate-lyase (180 aa).

Substrate contacts are provided by Arg82, Leu120, and Glu165.

This sequence belongs to the UbiC family.

It localises to the cytoplasm. It carries out the reaction chorismate = 4-hydroxybenzoate + pyruvate. The protein operates within cofactor biosynthesis; ubiquinone biosynthesis. Functionally, removes the pyruvyl group from chorismate, with concomitant aromatization of the ring, to provide 4-hydroxybenzoate (4HB) for the ubiquinone pathway. The sequence is that of Probable chorismate pyruvate-lyase from Aliivibrio fischeri (strain ATCC 700601 / ES114) (Vibrio fischeri).